The sequence spans 158 residues: Transcriptional regulator MraZ (158 aa).

SpoVT-AbrB domains are found at residues Lys-7–Val-66 and Leu-95–Lys-138.

Belongs to the MraZ family. As to quaternary structure, forms oligomers.

The protein resides in the cytoplasm. It is found in the nucleoid. This Prosthecochloris aestuarii (strain DSM 271 / SK 413) protein is Transcriptional regulator MraZ.